An 87-amino-acid polypeptide reads, in one-letter code: Large ribosomal subunit protein bL31B (87 aa).

The protein belongs to the bacterial ribosomal protein bL31 family. Type B subfamily. Part of the 50S ribosomal subunit.

This Burkholderia pseudomallei (strain 1106a) protein is Large ribosomal subunit protein bL31B.